A 2968-amino-acid polypeptide reads, in one-letter code: Trinucleotide repeat-containing gene 18 protein (2968 aa).

Disordered regions lie at residues methionine 1 to alanine 24 and glycine 139 to arginine 261. A compositionally biased stretch (low complexity) spans glycine 139–serine 150. 2 stretches are compositionally biased toward basic and acidic residues: residues glycine 221–serine 233 and glutamine 243–glutamate 260. Serine 263 is subject to Phosphoserine. The span at glycine 304–glutamate 322 shows a compositional bias: basic and acidic residues. 2 disordered regions span residues glycine 304 to valine 356 and phenylalanine 381 to glutamine 488. Positions glycine 327–alanine 351 are enriched in pro residues. 3 stretches are compositionally biased toward basic and acidic residues: residues arginine 395 to glycine 405, proline 419 to serine 431, and glutamate 464 to proline 479. Phosphoserine is present on serine 611. Disordered stretches follow at residues proline 612–histidine 679, glutamate 941–alanine 1002, proline 1019–valine 1055, aspartate 1106–proline 1190, serine 1212–threonine 1236, leucine 1279–proline 1306, lysine 1497–tyrosine 1566, and serine 1687–alanine 1855. A Glycyl lysine isopeptide (Lys-Gly) (interchain with G-Cter in SUMO2) cross-link involves residue lysine 620. Composition is skewed to basic and acidic residues over residues leucine 651–serine 660 and glutamate 941–leucine 955. The stretch at leucine 916–lysine 949 forms a coiled coil. Composition is skewed to low complexity over residues alanine 966–alanine 983 and proline 1019–proline 1031. The span at threonine 1032–proline 1043 shows a compositional bias: pro residues. Basic and acidic residues predominate over residues threonine 1046 to valine 1055. 2 positions are modified to phosphoserine: serine 1127 and serine 1136. Residues glutamate 1142–valine 1162 are compositionally biased toward basic and acidic residues. The span at glutamate 1171–leucine 1181 shows a compositional bias: pro residues. Residues leucine 1481–glutamate 1516 adopt a coiled-coil conformation. Residues lysine 1497–arginine 1519 are compositionally biased toward basic and acidic residues. The segment covering serine 1520–histidine 1534 has biased composition (basic residues). Serine 1540 bears the Phosphoserine mark. The span at glycine 1549 to serine 1563 shows a compositional bias: low complexity. Over residues serine 1816–alanine 1842 the composition is skewed to acidic residues. Serine 1857 and serine 1863 each carry phosphoserine. Disordered stretches follow at residues tyrosine 1912–alanine 2148 and leucine 2295–serine 2771. Basic and acidic residues-rich tracts occupy residues serine 1957 to glycine 1968 and leucine 1993 to leucine 2004. Residues alanine 2007–serine 2024 show a composition bias toward low complexity. A compositionally biased stretch (basic and acidic residues) spans proline 2034 to aspartate 2046. Over residues alanine 2069–alanine 2085 the composition is skewed to low complexity. Basic and acidic residues predominate over residues lysine 2093–glycine 2103. A Phosphothreonine modification is found at threonine 2146. Residues threonine 2307–aspartate 2316 are compositionally biased toward basic and acidic residues. The segment covering alanine 2329 to alanine 2338 has biased composition (basic residues). Residues glutamate 2365 to lysine 2374 show a composition bias toward low complexity. The span at serine 2375–alanine 2384 shows a compositional bias: basic and acidic residues. A compositionally biased stretch (pro residues) spans arginine 2390 to proline 2401. Over residues proline 2411–threonine 2433 the composition is skewed to low complexity. Basic and acidic residues-rich tracts occupy residues arginine 2441–glycine 2468 and alanine 2477–proline 2487. Low complexity-rich tracts occupy residues serine 2559–glutamate 2580 and serine 2603–serine 2671. The segment covering threonine 2673 to alanine 2685 has biased composition (acidic residues). The span at alanine 2723 to proline 2736 shows a compositional bias: pro residues. Serine 2771 carries the post-translational modification Phosphoserine. The region spanning glutamate 2817–aspartate 2962 is the BAH domain.

The chain is Trinucleotide repeat-containing gene 18 protein from Homo sapiens (Human).